The sequence spans 89 residues: Small ribosomal subunit protein uS15 (89 aa).

This sequence belongs to the universal ribosomal protein uS15 family. As to quaternary structure, part of the 30S ribosomal subunit. Forms a bridge to the 50S subunit in the 70S ribosome, contacting the 23S rRNA.

Its function is as follows. One of the primary rRNA binding proteins, it binds directly to 16S rRNA where it helps nucleate assembly of the platform of the 30S subunit by binding and bridging several RNA helices of the 16S rRNA. Functionally, forms an intersubunit bridge (bridge B4) with the 23S rRNA of the 50S subunit in the ribosome. This is Small ribosomal subunit protein uS15 from Serratia proteamaculans (strain 568).